The sequence spans 158 residues: NADH-quinone oxidoreductase subunit B 2 (158 aa).

[4Fe-4S] cluster contacts are provided by Cys-37, Cys-38, Cys-102, and Cys-132.

Belongs to the complex I 20 kDa subunit family. As to quaternary structure, NDH-1 is composed of 14 different subunits. Subunits NuoB, C, D, E, F, and G constitute the peripheral sector of the complex. [4Fe-4S] cluster is required as a cofactor.

It is found in the cell inner membrane. The enzyme catalyses a quinone + NADH + 5 H(+)(in) = a quinol + NAD(+) + 4 H(+)(out). NDH-1 shuttles electrons from NADH, via FMN and iron-sulfur (Fe-S) centers, to quinones in the respiratory chain. Couples the redox reaction to proton translocation (for every two electrons transferred, four hydrogen ions are translocated across the cytoplasmic membrane), and thus conserves the redox energy in a proton gradient. The chain is NADH-quinone oxidoreductase subunit B 2 from Acidithiobacillus ferrooxidans (strain ATCC 53993 / BNL-5-31) (Leptospirillum ferrooxidans (ATCC 53993)).